Here is a 633-residue protein sequence, read N- to C-terminus: Micronuclear linker histone polyprotein (633 aa).

2 DNA-binding regions (HMG box) span residues Pro-12–Tyr-74 and Pro-96–Asn-164. The tract at residues Ala-170–Gln-633 is disordered. A compositionally biased stretch (basic residues) spans Lys-174–Ser-190. 2 stretches are compositionally biased toward low complexity: residues Ser-212 to Ser-224 and Asn-253 to Ser-271. Basic residues-rich tracts occupy residues Lys-272–Ser-309 and Ser-330–Ser-352. Basic and acidic residues-rich tracts occupy residues Lys-353–Lys-374 and Ala-382–Thr-401. Over residues Asn-406–Gly-416 the composition is skewed to low complexity. The span at Ser-417–Ser-444 shows a compositional bias: basic residues. Residues Pro-446–Ser-469 are compositionally biased toward polar residues. The segment covering Arg-478 to Asn-491 has biased composition (basic and acidic residues). Residues Ser-496–Lys-524 are compositionally biased toward basic residues. Basic and acidic residues-rich tracts occupy residues Ser-540–Ala-550 and Glu-559–Lys-612.

Post-translationally, all four histones are processed from the precursor molecule. In terms of processing, phosphorylated in growing and dividing cells but not in nongrowing (starved) cells. The N-terminus of MIC LH-alpha and MIC LH-delta is blocked.

Its subcellular location is the nucleus. The protein localises to the chromosome. This is Micronuclear linker histone polyprotein (MLH) from Tetrahymena thermophila (strain SB210).